A 181-amino-acid polypeptide reads, in one-letter code: Adenine phosphoribosyltransferase (181 aa).

This sequence belongs to the purine/pyrimidine phosphoribosyltransferase family. Homodimer.

The protein resides in the cytoplasm. The enzyme catalyses AMP + diphosphate = 5-phospho-alpha-D-ribose 1-diphosphate + adenine. It participates in purine metabolism; AMP biosynthesis via salvage pathway; AMP from adenine: step 1/1. Functionally, catalyzes a salvage reaction resulting in the formation of AMP, that is energically less costly than de novo synthesis. In Vibrio vulnificus (strain CMCP6), this protein is Adenine phosphoribosyltransferase.